We begin with the raw amino-acid sequence, 285 residues long: Nucleotide-binding protein Avin_12760 (285 aa).

8–15 (GRSGSGKS) provides a ligand contact to ATP. Residue 60-63 (DARN) participates in GTP binding.

Belongs to the RapZ-like family.

Functionally, displays ATPase and GTPase activities. This is Nucleotide-binding protein Avin_12760 from Azotobacter vinelandii (strain DJ / ATCC BAA-1303).